Here is a 334-residue protein sequence, read N- to C-terminus: Ficolin-1 (334 aa).

Residues 1–17 form the signal peptide; sequence MQWPTLWAFSGLLCLCP. The interval 47 to 117 is disordered; it reads SCPGFPGPPG…SLGEKELGDT (71 aa). A Collagen-like domain is found at 50–88; that stretch reads GFPGPPGPKGEPGSPAGRGERGFQGSPGKMGPAGSKGEP. The 218-residue stretch at 117 to 334 folds into the Fibrinogen C-terminal domain; it reads TLCQRGPRSC…KVAEMKIRAS (218 aa). Cystine bridges form between cysteine 119-cysteine 147 and cysteine 126-cysteine 154. Positions 123–162 are a domain; contributes to trimerization; it reads PRSCKDLLTRGIFLTGWYTIHLPDCRPLTVLCDMDVDGGG. A b domain; contributes to trimerization region spans residues 163-251; the sequence is WTVFQRRVDG…LTLGQFLEGT (89 aa). The N-linked (GlcNAc...) asparagine glycan is linked to asparagine 261. Residues aspartate 270 and aspartate 272 each coordinate Ca(2+). Cysteine 278 and cysteine 291 are disulfide-bonded. An a carbohydrate-binding site is contributed by 290–292; it reads NCH. The segment at 325–334 is p domain; the sequence is KVAEMKIRAS.

This sequence belongs to the ficolin lectin family. In terms of assembly, homotrimer. Interacts with elastin/ELN. Interacts (via Fibrinogen C-terminal domain) with FFAR2. Interacts with CRP; may regulate monocyte activation by FCN1. As to expression, highly expressed in liver and spleen.

Its subcellular location is the secreted. It is found in the cell membrane. Functionally, extracellular lectin functioning as a pattern-recognition receptor in innate immunity. Binds the sugar moieties of pathogen-associated molecular patterns (PAMPs) displayed on microbes and activates the lectin pathway of the complement system. May also activate monocytes through a G protein-coupled receptor, FFAR2, inducing the secretion of interleukin-8/IL-8. Binds preferentially to 9-O-acetylated 2-6-linked sialic acid derivatives and to various glycans containing sialic acid engaged in a 2-3 linkage. The sequence is that of Ficolin-1 (Fcn1) from Mus musculus (Mouse).